A 247-amino-acid chain; its full sequence is Chymase (247 aa).

The N-terminal stretch at 1–19 (MHLLTLHLLLLLLGSSTKA) is a signal peptide. Residues 20-21 (GE) constitute a propeptide, activation peptide. Positions 22–245 (IIGGTECIPH…YRPWINKILR (224 aa)) constitute a Peptidase S1 domain. Cysteine 51 and cysteine 67 form a disulfide bridge. Residue histidine 66 is the Charge relay system of the active site. Asparagine 80 carries N-linked (GlcNAc...) asparagine glycosylation. Residue aspartate 110 is the Charge relay system of the active site. 2 disulfides stabilise this stretch: cysteine 144-cysteine 209 and cysteine 175-cysteine 188. The Charge relay system role is filled by serine 203.

Belongs to the peptidase S1 family. Granzyme subfamily. Mast cells.

The protein resides in the secreted. Its subcellular location is the cytoplasmic granule. The enzyme catalyses Preferential cleavage: Phe-|-Xaa &gt; Tyr-|-Xaa &gt; Trp-|-Xaa &gt; Leu-|-Xaa.. In terms of biological role, major secreted protease of mast cells with suspected roles in vasoactive peptide generation, extracellular matrix degradation, and regulation of gland secretion. The sequence is that of Chymase (Cma1) from Mus musculus (Mouse).